Consider the following 350-residue polypeptide: Phenylalanine--tRNA ligase alpha subunit (350 aa).

A Mg(2+)-binding site is contributed by glutamate 260.

The protein belongs to the class-II aminoacyl-tRNA synthetase family. Phe-tRNA synthetase alpha subunit type 1 subfamily. Tetramer of two alpha and two beta subunits. Mg(2+) is required as a cofactor.

The protein localises to the cytoplasm. The enzyme catalyses tRNA(Phe) + L-phenylalanine + ATP = L-phenylalanyl-tRNA(Phe) + AMP + diphosphate + H(+). The sequence is that of Phenylalanine--tRNA ligase alpha subunit from Mesoplasma florum (strain ATCC 33453 / NBRC 100688 / NCTC 11704 / L1) (Acholeplasma florum).